A 96-amino-acid chain; its full sequence is MTMDTAQLKSQIQQYLVESGNYELISNELKARLLQEGWVDKVKDLTKSEMNINESTNFTQILSTVEPKALEMVSDSTRETVLKQIREFLEEIVDTQ.

Lys68 participates in a covalent cross-link: Glycyl lysine isopeptide (Lys-Gly) (interchain with G-Cter in ubiquitin).

This sequence belongs to the ENY2 family. Component of the 1.8 MDa SAGA (Spt-Ada-Gcn5 acetyltransferase) complex, which is composed of 19 subunits TRA1, SPT7, TAF5, NGG1/ADA3, SGF73, SPT20/ADA5, SPT8, TAF12, TAF6, HFI1/ADA1, UBP8, GCN5, ADA2, SPT3, SGF29, TAF10, TAF9, SGF11 and SUS1. The SAGA complex is composed of 4 modules, namely the HAT (histone acetyltransferase) module (GCN5, ADA2, NGG1/ADA3 and SGF29), the DUB (deubiquitinating) module (UBP8, SGF11, SGF73 and SUS1), the core or TAF (TBP-associated factor) module (TAF5, TAF6, TAF9, TAF10 and TAF12), and the Tra1 or SPT (Suppressor of Ty) module (TRA1, HFI1/ADA1, SPT3, SPT7, SPT8 and SPT20/ADA5). The Tra1/SPT module binds activators, the core module recruits TBP (TATA-binding protein), the HAT module contains the histone H3 acetyltransferase GCN5, and the DUB module comprises the histone H2B deubiquitinase UBP8. Also identified in an altered form of SAGA, named SALSA (SAGA altered, Spt8 absent) or SLIK (SAGA-like) complex, which contains a C-terminal truncated form of SPT7 and is missing SPT8. However, it has been shown that the SAGA and SAGA-like SALSA/SLIK transcriptional coactivators are structurally and biochemically equivalent. Component of the nuclear pore complex (NPC)-associated TREX-2 complex (transcription and export complex 2), composed of at least SUS1, SAC3, THP1, SEM1, and CDC31. TREX-2 contains 2 SUS1 chains. The TREX-2 complex interacts with the mRNA export factors MEX67, MTR2 and SUB2, and the nucleoporin NUP1. Interacts directly with THP1, SAC3. Interacts directly with SGF11 and UBP8. Interacts with YRA1, MEX67 and with the RNA polymerase II.

Its subcellular location is the nucleus. It is found in the nucleoplasm. The protein localises to the cytoplasm. It localises to the P-body. Involved in mRNA export coupled transcription activation by association with both the TREX-2 and the SAGA complexes. SAGA acts as a general cofactor required for essentially all RNA polymerase II transcription. At the promoters, SAGA is required for transcription pre-initiation complex (PIC) recruitment. It influences RNA polymerase II transcriptional activity through different activities such as TBP interaction (via core/TAF module) and promoter selectivity, interaction with transcription activators (via Tra1/SPT module), and chromatin modification through histone acetylation (via HAT module) and deubiquitination (via DUB module). SAGA preferentially acetylates histones H3 (to form H3K9ac, H3K14ac, H3K18ac and H3K23ac) and H2B and deubiquitinates histone H2B. SAGA interacts with DNA via upstream activating sequences (UASs). Also identified in a modified version of SAGA named SALSA or SLIK. The cleavage of SPT7 and the absence of the SPT8 subunit in SLIK neither drive any major conformational differences in its structure compared with SAGA, nor significantly affect HAT, DUB, or DNA-binding activities. Within the SAGA complex, participates in a subcomplex with SGF11, SGF73 and UBP8 required for deubiquitination of H2B and for the maintenance of steady-state H3 methylation levels. The TREX-2 complex functions in docking export-competent ribonucleoprotein particles (mRNPs) to the nuclear entrance of the nuclear pore complex (nuclear basket), by association with components of the nuclear mRNA export machinery (MEX67-MTR2 and SUB2) in the nucleoplasm and the nucleoporin NUP1 at the nuclear basket. TREX-2 participates in mRNA export and accurate chromatin positioning in the nucleus by tethering genes to the nuclear periphery. SUS1 also has a role in mRNP biogenesis and maintenance of genome integrity through preventing RNA-mediated genome instability. Has a role in response to DNA damage induced by methyl methane sulfonate (MMS) and replication arrest induced by hydroxyurea. May also be involved in cytoplasmic mRNA decay by interaction with components of P-bodies. This Saccharomyces cerevisiae (strain ATCC 204508 / S288c) (Baker's yeast) protein is SAGA complex subunit SUS1.